The following is a 1111-amino-acid chain: Probable arabinosyltransferase A (1111 aa).

13 consecutive transmembrane segments (helical) span residues 12 to 34 (IIRL…VPLL), 205 to 224 (IAVG…LSAL), 333 to 355 (VWMR…HWVL), 370 to 387 (VAVL…LPFN), 394 to 413 (PLIA…AIAL), 423 to 445 (AVVA…ALLT), 462 to 484 (GLLA…VFHS), 530 to 547 (FPVL…VVLL), 554 to 576 (GLAS…LLTF), 581 to 603 (WAIQ…AFAF), 615 to 637 (TVYI…GWFG), 652 to 674 (IAGH…LAGG), and 695 to 717 (FLAT…GSLA). A disordered region spans residues 804 to 831 (GLVNSDASPNKPNVTFSDSAGTAGGKGP). Polar residues predominate over residues 808–823 (SDASPNKPNVTFSDSA).

Belongs to the emb family.

Its subcellular location is the cell membrane. In terms of biological role, arabinosyl transferase responsible for the polymerization of arabinose into the arabinan of arabinogalactan. In Mycobacterium leprae (strain TN), this protein is Probable arabinosyltransferase A (embA).